Consider the following 218-residue polypeptide: Pyridoxine/pyridoxamine 5'-phosphate oxidase (218 aa).

Substrate contacts are provided by residues 14–17 (RREY) and lysine 72. FMN-binding positions include 67-72 (RIVLLK), 82-83 (YT), arginine 88, lysine 89, and glutamine 111. Positions 129, 133, and 137 each coordinate substrate. FMN-binding positions include 146 to 147 (QS) and tryptophan 191. Residue 197-199 (RLH) coordinates substrate. An FMN-binding site is contributed by arginine 201.

Belongs to the pyridoxamine 5'-phosphate oxidase family. As to quaternary structure, homodimer. FMN serves as cofactor.

The enzyme catalyses pyridoxamine 5'-phosphate + O2 + H2O = pyridoxal 5'-phosphate + H2O2 + NH4(+). The catalysed reaction is pyridoxine 5'-phosphate + O2 = pyridoxal 5'-phosphate + H2O2. The protein operates within cofactor metabolism; pyridoxal 5'-phosphate salvage; pyridoxal 5'-phosphate from pyridoxamine 5'-phosphate: step 1/1. Its pathway is cofactor metabolism; pyridoxal 5'-phosphate salvage; pyridoxal 5'-phosphate from pyridoxine 5'-phosphate: step 1/1. Catalyzes the oxidation of either pyridoxine 5'-phosphate (PNP) or pyridoxamine 5'-phosphate (PMP) into pyridoxal 5'-phosphate (PLP). The chain is Pyridoxine/pyridoxamine 5'-phosphate oxidase from Cronobacter sakazakii (strain ATCC BAA-894) (Enterobacter sakazakii).